The following is a 264-amino-acid chain: 4-hydroxy-tetrahydrodipicolinate reductase (264 aa).

NAD(+) is bound at residue 8–13 (GPRGNM). Lys-36 contacts NADP(+). Residues 97 to 99 (GTT) and 123 to 126 (APNF) contribute to the NAD(+) site. Residue His-153 is the Proton donor/acceptor of the active site. His-154 contacts (S)-2,3,4,5-tetrahydrodipicolinate. The active-site Proton donor is Lys-157. 163–164 (GT) contacts (S)-2,3,4,5-tetrahydrodipicolinate.

The protein belongs to the DapB family.

It is found in the cytoplasm. It carries out the reaction (S)-2,3,4,5-tetrahydrodipicolinate + NAD(+) + H2O = (2S,4S)-4-hydroxy-2,3,4,5-tetrahydrodipicolinate + NADH + H(+). It catalyses the reaction (S)-2,3,4,5-tetrahydrodipicolinate + NADP(+) + H2O = (2S,4S)-4-hydroxy-2,3,4,5-tetrahydrodipicolinate + NADPH + H(+). Its pathway is amino-acid biosynthesis; L-lysine biosynthesis via DAP pathway; (S)-tetrahydrodipicolinate from L-aspartate: step 4/4. In terms of biological role, catalyzes the conversion of 4-hydroxy-tetrahydrodipicolinate (HTPA) to tetrahydrodipicolinate. The chain is 4-hydroxy-tetrahydrodipicolinate reductase from Shouchella clausii (strain KSM-K16) (Alkalihalobacillus clausii).